The primary structure comprises 284 residues: Tropomyosin (284 aa).

Residues 1 to 273 are a coiled coil; sequence MDAIKKKMLA…KEKYKAISDE (273 aa).

It belongs to the tropomyosin family. As to quaternary structure, homodimer.

Its function is as follows. Tropomyosin, in association with the troponin complex, plays a central role in the calcium dependent regulation of muscle contraction. The sequence is that of Tropomyosin from Haliotis diversicolor (Abalone).